A 232-amino-acid chain; its full sequence is Ion-translocating oxidoreductase complex subunit E (232 aa).

6 helical membrane-spanning segments follow: residues 18–38, 39–59, 69–89, 93–113, 127–147, and 182–202; these read GLVQ…LTNA, LGLG…VSLV, IPVF…LINA, GLYL…IIIG, AAFD…VLGA, and PFLL…LIAL.

The protein belongs to the NqrDE/RnfAE family. As to quaternary structure, the complex is composed of six subunits: RnfA, RnfB, RnfC, RnfD, RnfE and RnfG.

The protein resides in the cell inner membrane. Its function is as follows. Part of a membrane-bound complex that couples electron transfer with translocation of ions across the membrane. In Shewanella sp. (strain MR-4), this protein is Ion-translocating oxidoreductase complex subunit E.